A 440-amino-acid chain; its full sequence is Tetratricopeptide repeat protein 5 (440 aa).

TPR repeat units follow at residues 7–61 (EEVK…EEVV), 68–98 (AQVL…AVKL), 103–130 (VEAW…SGAL), 136–174 (KVSL…AVQM), and 179–216 (GRSW…AEKV). Residues 13-24 (LQKLQELVDQLY) carry the Nuclear export signal motif. Ser203 carries the phosphoserine; by ATM modification. A Phosphoserine; by CHEK2 modification is found at Ser221. One copy of the TPR 6 repeat lies at 224 to 253 (PDLHLNRATLHKYEESYGEALEGFSRAAAL). The mediates interaction with 28S rRNA of ribosome-coding tubulin stretch occupies residues 285–287 (KTK).

In terms of assembly, interacts with JMY and p300/EP300; the interaction occurs in the nucleus and augments the association between JMY and p300/EP300 in response to DNA damage. Forms a complex with HSF1 and p300/EP300; these interactions augment chromatin-bound HSF1 and p300/EP300 histone acetyltransferase activity, resulting in enhanced heat-shock-responsive transcription. Interacts with PRMT5; the interaction is DNA damage-dependent and promotes PRMT5 interaction with p53/TP53 and subsequent methylation. Interacts with JMY; the interaction occurs in the cytoplasm and results in the inhibition of JYM's nucleation activity. Interacts with ribosome-coding tubulin (via 60S subunit 28S rRNA and protein uL24/RPL26) and the N-terminal of nascent tubulin polypeptide (via alpha-tubulin MREC motif and beta-tubulin MREI motif); these interactions result in tubulin mRNA-targeted degradation. Interacts with ATP5F1B; the interaction occurs in the mitochondria and results in ATP production decrease. Interacts with p53/TP53; the interaction occurs in the mitochondria and results in increased apoptosis. Post-translationally, phosphorylation by ATM kinase induces nuclear accumulation while interfering with nuclear export, and phosphorylation by CHEK2 kinase enhances nuclear stability.

The protein resides in the nucleus. It localises to the cytoplasm. The protein localises to the cytoplasmic vesicle. Its subcellular location is the mitochondrion matrix. Functionally, cofactor involved in the regulation of various cellular mechanisms such as actin regulation, autophagy, chromatin regulation and DNA repair. In non-stress conditions, interacts with cofactor JMY in the cytoplasm which prevents JMY's actin nucleation activity and ability to activate the Arp2/3 complex. Acts as a negative regulator of nutrient stress-induced autophagy by preventing JMY's interaction with MAP1LC3B, thereby preventing autophagosome formation. Involves in tubulin autoregulation by promoting its degradation in response to excess soluble tubulin. To do so, associates with the active ribosome near the ribosome exit tunnel and with nascent tubulin polypeptides early during their translation, triggering tubulin mRNA-targeted degradation. Following DNA damage, phosphorylated by DNA damage responsive protein kinases ATM and CHEK2, leading to its nuclear accumulation and stability. Nuclear TTC5/STRAP promotes the assembly of a stress-responsive p53/TP53 coactivator complex, which includes the coactivators JMY and p300, thereby increasing p53/TP53-dependent transcription and apoptosis. Also recruits arginine methyltransferase PRMT5 to p53/TP53 when DNA is damaged, allowing PRMT5 to methylate p53/TP53. In DNA stress conditions, also prevents p53/TP53 degradation by E3 ubiquitin ligase MDM2. Upon heat-shock stress, forms a chromatin-associated complex with heat-shock factor 1 HSF1 and p300/EP300 to stimulate heat-shock-responsive transcription, thereby increasing cell survival. Mitochondrial TTC5/STRAP interacts with ATP synthase subunit beta ATP5F1B which decreased ATP synthase activity and lowers mitochondrial ATP production, thereby regulating cellular respiration and mitochondrial-dependent apoptosis. Mitochondrial TTC5/STRAP also regulates p53/TP53-mediated apoptosis. This is Tetratricopeptide repeat protein 5 from Homo sapiens (Human).